The primary structure comprises 599 residues: Elongation factor 4 (599 aa).

Residues 5–187 (NHIRNFSIIA…QIVQLVPPPE (183 aa)) form the tr-type G domain. GTP contacts are provided by residues 17 to 22 (DHGKST) and 134 to 137 (NKMD).

The protein belongs to the TRAFAC class translation factor GTPase superfamily. Classic translation factor GTPase family. LepA subfamily.

Its subcellular location is the cell inner membrane. It catalyses the reaction GTP + H2O = GDP + phosphate + H(+). Functionally, required for accurate and efficient protein synthesis under certain stress conditions. May act as a fidelity factor of the translation reaction, by catalyzing a one-codon backward translocation of tRNAs on improperly translocated ribosomes. Back-translocation proceeds from a post-translocation (POST) complex to a pre-translocation (PRE) complex, thus giving elongation factor G a second chance to translocate the tRNAs correctly. Binds to ribosomes in a GTP-dependent manner. The protein is Elongation factor 4 of Hahella chejuensis (strain KCTC 2396).